Consider the following 428-residue polypeptide: Tyrosine--tRNA ligase (428 aa).

Y41 lines the L-tyrosine pocket. Residues 46–55 (PTADSLHLGH) carry the 'HIGH' region motif. Residues Y179 and Q183 each coordinate L-tyrosine. Positions 239 to 243 (KFGKT) match the 'KMSKS' region motif. K242 provides a ligand contact to ATP. The S4 RNA-binding domain maps to 361-418 (ADLMQALVDSELQPSRGQARKTIASNAITINGEKQSDPEYTFSDSDRLFGRYTLLRRG).

The protein belongs to the class-I aminoacyl-tRNA synthetase family. TyrS type 1 subfamily. As to quaternary structure, homodimer.

The protein resides in the cytoplasm. The catalysed reaction is tRNA(Tyr) + L-tyrosine + ATP = L-tyrosyl-tRNA(Tyr) + AMP + diphosphate + H(+). Functionally, catalyzes the attachment of tyrosine to tRNA(Tyr) in a two-step reaction: tyrosine is first activated by ATP to form Tyr-AMP and then transferred to the acceptor end of tRNA(Tyr). This is Tyrosine--tRNA ligase from Cronobacter sakazakii (strain ATCC BAA-894) (Enterobacter sakazakii).